Here is a 481-residue protein sequence, read N- to C-terminus: Tryptophan 5-hydroxylase (481 aa).

The ACT domain occupies 56-131; sequence SVIFSLKNEI…NVISMSPPEN (76 aa). Tyrosine 272, arginine 294, and threonine 302 together coordinate L-tryptophan. Histidine 309, histidine 314, and glutamate 354 together coordinate Fe cation. Serine 373 and isoleucine 403 together coordinate L-tryptophan.

Belongs to the biopterin-dependent aromatic amino acid hydroxylase family. In terms of assembly, homotetramer. Requires Fe(2+) as cofactor.

It catalyses the reaction (6R)-L-erythro-5,6,7,8-tetrahydrobiopterin + L-tryptophan + O2 = 5-hydroxy-L-tryptophan + (4aS,6R)-4a-hydroxy-L-erythro-5,6,7,8-tetrahydrobiopterin. The protein operates within aromatic compound metabolism; serotonin biosynthesis; serotonin from L-tryptophan: step 1/2. In terms of biological role, oxidizes L-tryptophan to 5-hydroxy-l-tryptophan in the rate-determining step of serotonin biosynthesis. This is Tryptophan 5-hydroxylase (tph1) from Xenopus laevis (African clawed frog).